A 341-amino-acid chain; its full sequence is HTH-type transcriptional repressor PurR (341 aa).

The region spanning 2-56 is the HTH lacI-type domain; the sequence is ATIKDVAKRANVSTTTVSHVINKTRFVAEETRNAVWAAIKELHYSPSAVARSLKV. Residues 4–23 constitute a DNA-binding region (H-T-H motif); that stretch reads IKDVAKRANVSTTTVSHVIN. A DNA-binding region spans residues 48 to 56; sequence SAVARSLKV. Hypoxanthine-binding residues include tyrosine 73, arginine 190, threonine 192, phenylalanine 221, and aspartate 275.

Homodimer.

Its pathway is purine metabolism; purine nucleotide biosynthesis [regulation]. Functionally, is the main repressor of the genes involved in the de novo synthesis of purine nucleotides, regulating purB, purC, purEK, purF, purHD, purL, purMN and guaBA expression. PurR is allosterically activated to bind its cognate DNA by binding the purine corepressors, hypoxanthine or guanine, thereby effecting transcription repression. This is HTH-type transcriptional repressor PurR from Salmonella arizonae (strain ATCC BAA-731 / CDC346-86 / RSK2980).